The following is a 2206-amino-acid chain: Genome polyprotein (2206 aa).

A lipid anchor (N-myristoyl glycine; by host) is attached at Gly-2. The Cytoplasmic segment spans residues 2–1517 (GAQVSSQKVG…NINRAMTILQ (1516 aa)). 2 amphipathic alpha-helix regions span residues 579–599 (GVDD…LPKP) and 579–603 (GVDD…QSNL). Catalysis depends on for protease 2A activity residues His-898 and Asp-916. 2 residues coordinate Zn(2+): Cys-933 and Cys-935. The For protease 2A activity role is filled by Cys-987. 2 residues coordinate Zn(2+): Cys-993 and His-995. The membrane-binding stretch occupies residues 1125–1197 (GDSWLKKFTE…HQSCPSQEHQ (73 aa)). The tract at residues 1125 to 1263 (GDSWLKKFTE…SPGTGKSVAT (139 aa)) is oligomerization. Positions 1146-1150 (SNKIS) are RNA-binding. Residues 1229–1385 (EHTINNYIQF…SEYSRDGKLN (157 aa)) form the SF3 helicase domain. An ATP-binding site is contributed by 1253-1260 (GSPGTGKS). The Zn(2+) site is built by Cys-1393, Cys-1396, Cys-1405, and Cys-1410. The segment at 1393–1410 (CKNCHQPANFKRCCPLVC) adopts a C4-type zinc-finger fold. An RNA-binding region spans residues 1437–1444 (EKNRRSNI). The tract at residues 1448–1453 (MEALFQ) is oligomerization. The stretch at 1518–1533 (AVTTFAAVAGVVYVMY) is an intramembrane region. Over 1534 to 2206 (KLFAGHQGAY…TLYRRWLDSF (673 aa)) the chain is Cytoplasmic. O-(5'-phospho-RNA)-tyrosine is present on Tyr-1543. Positions 1563–1741 (GPGFDYAVAM…FAAALKRSYF (179 aa)) constitute a Peptidase C3 domain. Residues His-1602, Glu-1633, and Cys-1709 each act as for protease 3C activity in the active site. A RdRp catalytic domain is found at 1972–2087 (EKLFAFDYTG…SYPHEVDASL (116 aa)). Mg(2+) contacts are provided by Asp-1978 and Asp-2073.

Belongs to the picornaviruses polyprotein family. As to quaternary structure, interacts with capsid protein VP1 and capsid protein VP3 to form heterotrimeric protomers. In terms of assembly, interacts with capsid protein VP0, and capsid protein VP3 to form heterotrimeric protomers. Interacts with human PVR. Five protomers subsequently associate to form pentamers which serve as building blocks for the capsid. Interacts with capsid protein VP2, capsid protein VP3 and capsid protein VP4 following cleavage of capsid protein VP0. Interacts with capsid protein VP1 and capsid protein VP3 in the mature capsid. As to quaternary structure, interacts with capsid protein VP0 and capsid protein VP1 to form heterotrimeric protomers. Five protomers subsequently associate to form pentamers which serve as building blocks for the capsid. Interacts with capsid protein VP4 in the mature capsid. Interacts with protein 2C; this interaction may be important for virion morphogenesis. In terms of assembly, interacts with capsid protein VP1 and capsid protein VP3. Homodimer. As to quaternary structure, homohexamer; forms a hexameric ring structure with 6-fold symmetry characteristic of AAA+ ATPases. Interacts (via N-terminus) with host RTN3 (via reticulon domain); this interaction is important for viral replication. Interacts with capsid protein VP3; this interaction may be important for virion morphogenesis. In terms of assembly, interacts with protein 3CD. Homodimer. Interacts with host GBF1. Interacts (via GOLD domain) with host ACBD3 (via GOLD domain); this interaction allows the formation of a viral protein 3A/ACBD3 heterotetramer with a 2:2 stoichiometry, which will stimulate the recruitment of host PI4KB in order to synthesize PI4P at the viral RNA replication sites. As to quaternary structure, interacts with RNA-directed RNA polymerase. In terms of assembly, interacts with protein 3AB and with RNA-directed RNA polymerase. Interacts with Viral protein genome-linked and with protein 3CD. The cofactor is Mg(2+). In terms of processing, specific enzymatic cleavages in vivo by the viral proteases yield processing intermediates and the mature proteins. Post-translationally, myristoylation is required for the formation of pentamers during virus assembly. Further assembly of 12 pentamers and a molecule of genomic RNA generates the provirion. During virion maturation, immature virions are rendered infectious following cleavage of VP0 into VP4 and VP2. This maturation seems to be an autocatalytic event triggered by the presence of RNA in the capsid and it is followed by a conformational change infectious virion. In terms of processing, myristoylation is required during RNA encapsidation and formation of the mature virus particle. Post-translationally, VPg is uridylylated by the polymerase into VPg-pUpU. This acts as a nucleotide-peptide primer for the genomic RNA replication.

The protein resides in the virion. It localises to the host cytoplasm. Its subcellular location is the host cytoplasmic vesicle membrane. The protein localises to the host nucleus. It catalyses the reaction a ribonucleoside 5'-triphosphate + H2O = a ribonucleoside 5'-diphosphate + phosphate + H(+). It carries out the reaction Selective cleavage of Tyr-|-Gly bond in the picornavirus polyprotein.. The enzyme catalyses RNA(n) + a ribonucleoside 5'-triphosphate = RNA(n+1) + diphosphate. The catalysed reaction is Selective cleavage of Gln-|-Gly bond in the poliovirus polyprotein. In other picornavirus reactions Glu may be substituted for Gln, and Ser or Thr for Gly.. Its activity is regulated as follows. Replication or transcription is subject to high level of random mutations by the nucleotide analog ribavirin. Its function is as follows. Forms an icosahedral capsid of pseudo T=3 symmetry with capsid proteins VP2 and VP3. The capsid is 300 Angstroms in diameter, composed of 60 copies of each capsid protein and enclosing the viral positive strand RNA genome. Capsid protein VP1 mainly forms the vertices of the capsid. Capsid protein VP1 interacts with host cell receptor PVR to provide virion attachment to target host cells. This attachment induces virion internalization predominantly through clathrin- and caveolin-independent endocytosis in Hela cells and through caveolin-mediated endocytosis in brain microvascular endothelial cells. Tyrosine kinases are probably involved in the entry process. Virus binding to PVR induces increased junctional permeability and rearrangement of junctional proteins. Modulation of endothelial tight junctions, as well as cytolytic infection of endothelial cells themselves, may result in loss of endothelial integrity which may help the virus to reach the CNS. After binding to its receptor, the capsid undergoes conformational changes. Capsid protein VP1 N-terminus (that contains an amphipathic alpha-helix) and capsid protein VP4 are externalized. Together, they shape a pore in the host membrane through which viral genome is translocated to host cell cytoplasm. Functionally, forms an icosahedral capsid of pseudo T=3 symmetry with capsid proteins VP2 and VP3. The capsid is 300 Angstroms in diameter, composed of 60 copies of each capsid protein and enclosing the viral positive strand RNA genome. Lies on the inner surface of the capsid shell. After binding to the host receptor, the capsid undergoes conformational changes. Capsid protein VP4 is released, Capsid protein VP1 N-terminus is externalized, and together, they shape a pore in the host membrane through which the viral genome is translocated into the host cell cytoplasm. In terms of biological role, component of immature procapsids, which is cleaved into capsid proteins VP4 and VP2 after maturation. Allows the capsid to remain inactive before the maturation step. Its function is as follows. Cysteine protease that cleaves viral polyprotein and specific host proteins. It is responsible for the autocatalytic cleavage between the P1 and P2 regions, which is the first cleavage occurring in the polyprotein. Also cleaves the host translation initiation factor EIF4G1, in order to shut down the capped cellular mRNA translation. Inhibits the host nucleus-cytoplasm protein and RNA trafficking by cleaving host members of the nuclear pores including NUP98, NUP62 and NUP153. Counteracts stress granule formation probably by antagonizing its assembly or promoting its dissassembly. Cleaves and inhibits host IFIH1/MDA5, thereby inhibiting the type-I IFN production and the establishment of the antiviral state. Cleaves and inhibits host MAVS, thereby inhibiting the type-I IFN production and the establishment of the antiviral state. Functionally, plays an essential role in the virus replication cycle by acting as a viroporin. Creates a pore in the host endoplasmic reticulum and as a consequence releases Ca2+ in the cytoplasm of infected cell. In turn, high levels of cytoplasmic calcium may trigger membrane trafficking and transport of viral ER-associated proteins to viroplasms, sites of viral genome replication. Induces and associates with structural rearrangements of intracellular membranes. Displays RNA-binding, nucleotide binding and NTPase activities. May play a role in virion morphogenesis and viral RNA encapsidation by interacting with the capsid protein VP3. In terms of biological role, localizes the viral replication complex to the surface of membranous vesicles. Together with protein 3CD binds the Cis-Active RNA Element (CRE) which is involved in RNA synthesis initiation. Acts as a cofactor to stimulate the activity of 3D polymerase, maybe through a nucleid acid chaperone activity. Its function is as follows. Localizes the viral replication complex to the surface of membranous vesicles. It inhibits host cell endoplasmic reticulum-to-Golgi apparatus transport and causes the disassembly of the Golgi complex, possibly through GBF1 interaction. This would result in depletion of MHC, trail receptors and IFN receptors at the host cell surface. Plays an essential role in viral RNA replication by recruiting ACBD3 and PI4KB at the viral replication sites, thereby allowing the formation of the rearranged membranous structures where viral replication takes place. Functionally, acts as a primer for viral RNA replication and remains covalently bound to viral genomic RNA. VPg is uridylylated prior to priming replication into VPg-pUpU. The oriI viral genomic sequence may act as a template for this. The VPg-pUpU is then used as primer on the genomic RNA poly(A) by the RNA-dependent RNA polymerase to replicate the viral genome. During genome replication, the VPg-RNA linkage is removed by the host TDP2, thereby accelerating replication. During the late stage of the replication cycle, host TDP2 is excluded from sites of viral RNA synthesis and encapsidation, allowing for the generation of progeny virions. Involved in the viral replication complex and viral polypeptide maturation. It exhibits protease activity with a specificity and catalytic efficiency that is different from protease 3C. Protein 3CD lacks polymerase activity. Protein 3CD binds to the 5'UTR of the viral genome. In terms of biological role, major viral protease that mediates proteolytic processing of the polyprotein. Cleaves host EIF5B, contributing to host translation shutoff. Also cleaves host PABPC1, contributing to host translation shutoff. Cleaves host RIGI and thus contributes to the inhibition of type I interferon production. Cleaves host NLRP1, triggers host N-glycine-mediated degradation of the autoinhibitory NLRP1 N-terminal fragment. Inhibits the integrated stress response (ISR) in the infected cell by cleaving host G3BP1. Stress granule formation is thus inhibited, which allows protein synthesis and viral replication. Its function is as follows. Replicates the viral genomic RNA on the surface of intracellular membranes. May form linear arrays of subunits that propagate along a strong head-to-tail interaction called interface-I. Covalently attaches UMP to a tyrosine of VPg, which is used to prime RNA synthesis. The positive stranded RNA genome is first replicated at virus induced membranous vesicles, creating a dsRNA genomic replication form. This dsRNA is then used as template to synthesize positive stranded RNA genomes. ss(+)RNA genomes are either translated, replicated or encapsidated. The sequence is that of Genome polyprotein from Poliovirus type 3 (strain 23127).